A 1299-amino-acid polypeptide reads, in one-letter code: DNA-directed RNA polymerase subunit beta' (1299 aa).

The Zn(2+) site is built by cysteine 60, cysteine 62, cysteine 75, and cysteine 78. The interval 188-209 is disordered; it reads GAKSDQKRRAKDGAEKEMGQTR. Mg(2+) contacts are provided by aspartate 535, aspartate 537, and aspartate 539. Cysteine 882, cysteine 959, cysteine 966, and cysteine 969 together coordinate Zn(2+).

It belongs to the RNA polymerase beta' chain family. The RNAP catalytic core consists of 2 alpha, 1 beta, 1 beta' and 1 omega subunit. When a sigma factor is associated with the core the holoenzyme is formed, which can initiate transcription. Requires Mg(2+) as cofactor. The cofactor is Zn(2+).

The catalysed reaction is RNA(n) + a ribonucleoside 5'-triphosphate = RNA(n+1) + diphosphate. Functionally, DNA-dependent RNA polymerase catalyzes the transcription of DNA into RNA using the four ribonucleoside triphosphates as substrates. The sequence is that of DNA-directed RNA polymerase subunit beta' from Clavibacter michiganensis subsp. michiganensis (strain NCPPB 382).